A 145-amino-acid chain; its full sequence is D-aminoacyl-tRNA deacylase (145 aa).

The short motif at 137 to 138 (GP) is the Gly-cisPro motif, important for rejection of L-amino acids element.

The protein belongs to the DTD family. Homodimer.

Its subcellular location is the cytoplasm. The enzyme catalyses glycyl-tRNA(Ala) + H2O = tRNA(Ala) + glycine + H(+). The catalysed reaction is a D-aminoacyl-tRNA + H2O = a tRNA + a D-alpha-amino acid + H(+). In terms of biological role, an aminoacyl-tRNA editing enzyme that deacylates mischarged D-aminoacyl-tRNAs. Also deacylates mischarged glycyl-tRNA(Ala), protecting cells against glycine mischarging by AlaRS. Acts via tRNA-based rather than protein-based catalysis; rejects L-amino acids rather than detecting D-amino acids in the active site. By recycling D-aminoacyl-tRNA to D-amino acids and free tRNA molecules, this enzyme counteracts the toxicity associated with the formation of D-aminoacyl-tRNA entities in vivo and helps enforce protein L-homochirality. The polypeptide is D-aminoacyl-tRNA deacylase (Klebsiella pneumoniae (strain 342)).